Reading from the N-terminus, the 312-residue chain is Olfactory receptor 1D2 (312 aa).

The Extracellular portion of the chain corresponds to 1–25 (MDGGNQSEGSEFLLLGMSESPEQQR). Asparagine 5 is a glycosylation site (N-linked (GlcNAc...) asparagine). Residues 26-49 (ILFWMFLSMYLVTVVGNVLIILAI) traverse the membrane as a helical segment. Topologically, residues 50–57 (SSDSRLHT) are cytoplasmic. A helical transmembrane segment spans residues 58–79 (PVYFFLANLSFTDLFFVTNTIP). At 80 to 100 (KMLVNLQSHNKAISYAGCLTQ) the chain is on the extracellular side. Cysteine 97 and cysteine 189 are disulfide-bonded. The helical transmembrane segment at 101 to 120 (LYFLVSLVALDNLILAVMAY) threads the bilayer. At 121–139 (DRYVAICCPLHYTTAMSPK) the chain is on the cytoplasmic side. The chain crosses the membrane as a helical span at residues 140 to 158 (LCILLLSLCWVLSVLYGLI). Residues 159-196 (HTLLMTRVTFCGSRKIHYIFCEMYVLLRMACSNIQINH) lie on the Extracellular side of the membrane. An N-linked (GlcNAc...) asparagine glycan is attached at asparagine 195. A helical transmembrane segment spans residues 197 to 219 (TVLIATGCFIFLIPFGFVIISYV). At 220–236 (LIIRAILRIPSVSKKYK) the chain is on the cytoplasmic side. A helical membrane pass occupies residues 237 to 259 (AFSTCASHLGAVSLFYGTLCMVY). Residues 260–271 (LKPLHTYSVKDS) lie on the Extracellular side of the membrane. The helical transmembrane segment at 272-291 (VATVMYAVVTPMMNPFIYSL) threads the bilayer. Residues 292 to 312 (RNKDMHGALGRLLDKHFKRLT) lie on the Cytoplasmic side of the membrane.

The protein belongs to the G-protein coupled receptor 1 family. Expressed in testis. Expressed in spermatozoa (at protein level). Expressed in olfactory epithelium.

The protein resides in the cell membrane. In terms of biological role, odorant receptor which may be involved in sperm chemotaxis. Bourgeonal is a strong chemoattractant for sperm in vitro and is shown to be a strong agonist for OR1D2 in vitro. May also function in olfactory reception. The protein is Olfactory receptor 1D2 (OR1D2) of Homo sapiens (Human).